Consider the following 381-residue polypeptide: MTEFWLISAPGDKTCQQTWDKMNMATAESNNLSTNNKFNIPELKVGTLDVLVGLSDELAKLDTFVESVVKKIAQYMTDVLEDSRDKVQENLLANGVDLVTYITRFQWDMAKYPIKQSLKSISEIMSKQVTQIDNDLKARASAYNSLKGSLQSLERKNVGSLLTRSLADIVKKEDFVLDSEYLTTLLVIVSKTNYPEWQKTYETLSEMVVPRSTKLLFEDQESGLFSVTLFTKAIDDFKQQARENKFMVRDFLYNEEEMKADKEEMTRLSTDKKKQFGPLVRWLKVNFSETFIAWIHIKALRVFTESVLRYGLPVNFQAMLLQPNKKNVKKLREVLKDLYKHLDSSAAVIDGSVDIPGLNLSQQEYYPYVYYKIDVNLLELK.

Threonine 2 is modified (N-acetylthreonine).

The protein belongs to the V-ATPase C subunit family. V-ATPase is a heteromultimeric enzyme made up of two complexes: the ATP-hydrolytic V1 complex and the proton translocation V0 complex. The V1 complex consists of three catalytic AB heterodimers that form a heterohexamer, three peripheral stalks each consisting of EG heterodimers, one central rotor including subunits D and F, and the regulatory subunits C and H. The proton translocation complex V0 consists of the proton transport subunit a, a ring of proteolipid subunits c9c'', rotary subunit d, subunits e and f, and two accessory subunits.

Functionally, subunit of the V1 complex of vacuolar(H+)-ATPase (V-ATPase), a multisubunit enzyme composed of a peripheral complex (V1) that hydrolyzes ATP and a membrane integral complex (V0) that translocates protons. V-ATPase is responsible for acidifying and maintaining the pH of intracellular compartments and in some cell types, is targeted to the plasma membrane, where it is responsible for acidifying the extracellular environment. Subunit C is necessary for the assembly of the catalytic sector of the enzyme and is likely to have a specific function in its catalytic activity. The sequence is that of V-type proton ATPase subunit C 1-B (atp6v1c1b) from Danio rerio (Zebrafish).